Here is a 127-residue protein sequence, read N- to C-terminus: Large-conductance mechanosensitive channel (127 aa).

The next 3 membrane-spanning stretches (helical) occupy residues 9–29, 32–52, and 75–95; these read EFAM…GVAF, IVTA…LGGV, and VIDF…INLL.

Belongs to the MscL family. In terms of assembly, homopentamer.

Its subcellular location is the cell inner membrane. Functionally, channel that opens in response to stretch forces in the membrane lipid bilayer. May participate in the regulation of osmotic pressure changes within the cell. This Legionella pneumophila (strain Lens) protein is Large-conductance mechanosensitive channel.